A 562-amino-acid polypeptide reads, in one-letter code: MDKTLKLLILCLAWTCSFSALRCAARTYPPVATNQDQVIKFTTEGATSQSYKQFIEALRQRLTGGLIHDIPVLPDPTTVEERNRYITVELSNSERESIEVGIDVTNAYVVAYRAGSQSYFLRDAPASASTYLFPGTQRYSLRFDGSYGDLERWAHQTREEISLGLQALTHAISFLRSGASNDEEKARTLIVIIQMASEAARYRYISNRVGVSIRTGTAFQPDPAMLSLENNWDNLSGGVQQSVQDTFPNNVILSSINRQPVVVDSLSHPTVAVLALMLFVCNPPNANQSPLLIRSIVEESKICSSRYEPTVRIGGRDGMCVDVYDDGYHNGNRIIAWKCKDRLEENQLWTLKSDKTIRSNGKCLTTEGYAPGNYVMIYDCTSAVAEATYWEIWDNGTIINPKSALVLSAESSSMGGTLTVQTNEYLMRQGWRTGNNTSPFVTSISGYSDLCMQAQGSNVWLADCDNNKKEQQWALYTDGSIRSVQNTNNCLTSKDHKQGSPIVLMACSNGWASQRWLFKNDGSIYNLHDDMVMDVKRSDPSLKEIILHPYHGKPNQIWLTLF.

The signal sequence occupies residues 1 to 34; sequence MDKTLKLLILCLAWTCSFSALRCAARTYPPVATN. Position 35 is a pyrrolidone carboxylic acid (Gln35). Glu198 is an active-site residue. N-linked (GlcNAc...) asparagine glycosylation is present at Asn234. Disulfide bonds link Cys281–Cys303, Cys320–Cys339, and Cys363–Cys380. Residues 307-434 form the Ricin B-type lectin 1 domain; that stretch reads YEPTVRIGGR…YLMRQGWRTG (128 aa). Residues 317-359 form a 1-alpha repeat; it reads DGMCVDVYDDGYHNGNRIIAWKCKDRLEENQLWTLKSDKTIRS. The stretch at 360 to 400 is one 1-beta repeat; sequence NGKCLTTEGYAPGNYVMIYDCTSAVAEATYWEIWDNGTIIN. Residues Asn395 and Asn435 are each glycosylated (N-linked (GlcNAc...) asparagine). The stretch at 403-435 is one 1-gamma repeat; sequence SALVLSAESSSMGGTLTVQTNEYLMRQGWRTGN. The region spanning 437–561 is the Ricin B-type lectin 2 domain; it reads TSPFVTSISG…GKPNQIWLTL (125 aa). Residues 448–483 form a 2-alpha repeat; that stretch reads SDLCMQAQGSNVWLADCDNNKKEQQWALYTDGSIRS. 2 disulfide bridges follow: Cys451–Cys464 and Cys490–Cys507. Residues 487-526 form a 2-beta repeat; the sequence is TNNCLTSKDHKQGSPIVLMACSNGWASQRWLFKNDGSIYN. A 2-gamma repeat occupies 529 to 562; the sequence is DDMVMDVKRSDPSLKEIILHPYHGKPNQIWLTLF.

It in the N-terminal section; belongs to the ribosome-inactivating protein family. Type 2 RIP subfamily. Disulfide-linked dimer of A and B chains.

The catalysed reaction is Endohydrolysis of the N-glycosidic bond at one specific adenosine on the 28S rRNA.. In terms of biological role, the A chain is responsible for inhibiting protein synthesis through the catalytic inactivation of 60S ribosomal subunits by removing adenine from position 4,324 of 28S rRNA. Abrin-a is more toxic than ricin. Its function is as follows. The B chain is a galactose-specific lectin that facilitates the binding of abrin to the cell membrane that precedes endocytosis. The sequence is that of Abrin-c from Abrus precatorius (Indian licorice).